A 378-amino-acid chain; its full sequence is tRNA-specific 2-thiouridylase MnmA (378 aa).

Residues 9–16 and M35 contribute to the ATP site; that span reads GVSGGVDS. The interaction with target base in tRNA stretch occupies residues 94-96; it reads NPD. Residue C99 is the Nucleophile of the active site. C99 and C195 are oxidised to a cystine. G123 provides a ligand contact to ATP. The segment at 145–147 is interaction with tRNA; the sequence is KDQ. Residue C195 is the Cysteine persulfide intermediate of the active site. The interaction with tRNA stretch occupies residues 307-308; it reads RY.

Belongs to the MnmA/TRMU family.

The protein localises to the cytoplasm. The enzyme catalyses S-sulfanyl-L-cysteinyl-[protein] + uridine(34) in tRNA + AH2 + ATP = 2-thiouridine(34) in tRNA + L-cysteinyl-[protein] + A + AMP + diphosphate + H(+). Functionally, catalyzes the 2-thiolation of uridine at the wobble position (U34) of tRNA, leading to the formation of s(2)U34. This is tRNA-specific 2-thiouridylase MnmA from Xanthomonas oryzae pv. oryzae (strain PXO99A).